A 255-amino-acid chain; its full sequence is 4-hydroxy-tetrahydrodipicolinate reductase (255 aa).

Residues 9-14, D35, 89-91, and 115-118 contribute to the NAD(+) site; these read GFKGKM, GTT, and APNF. Catalysis depends on H145, which acts as the Proton donor/acceptor. Residue H146 coordinates (S)-2,3,4,5-tetrahydrodipicolinate. K149 functions as the Proton donor in the catalytic mechanism. A (S)-2,3,4,5-tetrahydrodipicolinate-binding site is contributed by 155–156; sequence GT.

It belongs to the DapB family.

The protein localises to the cytoplasm. The catalysed reaction is (S)-2,3,4,5-tetrahydrodipicolinate + NAD(+) + H2O = (2S,4S)-4-hydroxy-2,3,4,5-tetrahydrodipicolinate + NADH + H(+). It carries out the reaction (S)-2,3,4,5-tetrahydrodipicolinate + NADP(+) + H2O = (2S,4S)-4-hydroxy-2,3,4,5-tetrahydrodipicolinate + NADPH + H(+). It functions in the pathway amino-acid biosynthesis; L-lysine biosynthesis via DAP pathway; (S)-tetrahydrodipicolinate from L-aspartate: step 4/4. Catalyzes the conversion of 4-hydroxy-tetrahydrodipicolinate (HTPA) to tetrahydrodipicolinate. The polypeptide is 4-hydroxy-tetrahydrodipicolinate reductase (Streptococcus pneumoniae serotype 4 (strain ATCC BAA-334 / TIGR4)).